Reading from the N-terminus, the 448-residue chain is Packaging protein 1 (448 aa).

A disordered region spans residues 1-76; that stretch reads METKGRRSAA…SQPAKRGGLL (76 aa). A compositionally biased stretch (basic residues) spans 22-31; it reads PRKRPTRRAP. The span at 56–67 shows a compositional bias: polar residues; the sequence is RPSSDSLLQEPS. 171–178 contacts ATP; that stretch reads GPTGCGKS. The interval 440 to 448 is DNA-binding; it reads RAYRARKIK.

It belongs to the adenoviridae packaging protein 1 family. Homodimer. Part of a genome packaging complex composed of packaging proteins 1, 2 and 3; this complex specifically binds to the packaging sequence on the left end of viral genomic DNA and performs packaging of the viral genome. Interacts with protein 33K.

It is found in the virion. The protein localises to the host nucleus. It localises to the host nucleoplasm. The protein resides in the host nucleolus. In terms of biological role, component of the packaging machinery which encapsidates the viral DNA into preformed capsids and transcriptional activator of the viral major late promoter (MLP). Binds, along with packaging proteins 2 and 3, to the specific packaging sequence on the left end of viral genomic DNA and displays ATPase activity thereby providing the power stroke of the packaging machinery. The activity of packaging protein IVa2 is stimulated by protein 33K which acts as a terminase. May be the protein that pumps DNA into the capsid powered by ATP hydrolysis. Specifically binds to the 5'-CG-3' nucleotides of the repeats making up the packaging sequence. Component of the DEF-A and DEF-B transcription factors that bind downstream elements of the major late promoter (MLP), and stimulate transcription from the MLP after initiation of viral DNA replication. DEF-A is a heterodimer packaging proteins 1 and 2 and DEF-B is a homodimer of packaging protein 1. The protein is Packaging protein 1 of Human adenovirus B serotype 7 (HAdV-7).